Consider the following 130-residue polypeptide: MEDCIEWTGGVNSKGYGRKWVNGKLVTPHRHIYEETYGPVPTGIVVMHICDNPRCYNIKHLTLGTPKDNSEDMVTKGRQAKGEELSKKLTESDVLAIRSSTLSHRSLGELYGVSQSTITRILQRKTWRHI.

In Escherichia phage T7 (Bacteriophage T7), this protein is Protein 7.7.